Consider the following 617-residue polypeptide: Proline--tRNA ligase (617 aa).

It belongs to the class-II aminoacyl-tRNA synthetase family. ProS type 1 subfamily. In terms of assembly, homodimer.

The protein resides in the cytoplasm. The enzyme catalyses tRNA(Pro) + L-proline + ATP = L-prolyl-tRNA(Pro) + AMP + diphosphate. Functionally, catalyzes the attachment of proline to tRNA(Pro) in a two-step reaction: proline is first activated by ATP to form Pro-AMP and then transferred to the acceptor end of tRNA(Pro). As ProRS can inadvertently accommodate and process non-cognate amino acids such as alanine and cysteine, to avoid such errors it has two additional distinct editing activities against alanine. One activity is designated as 'pretransfer' editing and involves the tRNA(Pro)-independent hydrolysis of activated Ala-AMP. The other activity is designated 'posttransfer' editing and involves deacylation of mischarged Ala-tRNA(Pro). The misacylated Cys-tRNA(Pro) is not edited by ProRS. This is Proline--tRNA ligase from Treponema pallidum (strain Nichols).